A 910-amino-acid chain; its full sequence is p53-induced death domain-containing protein 1 (910 aa).

Positions Met1–Ala25 are disordered. Ala2 bears the N-acetylalanine mark. LRR repeat units follow at residues His126–Met147, Gly149–Pro171, Ala172–Ser194, Thr195–Leu216, Ser218–Arg240, Ser241–Pro263, and Leu264–Ala285. A phosphoserine mark is found at Ser299 and Ser305. ZU5 domains are found at residues Asp322–Pro454 and Val455–Thr596. 2 peptidase S68 regions span residues Asp423–Ser452 and Asp566–Tyr594. Active-site residues include His444, Ser446, His586, and Ser588. The interval Ala580 to Ala716 is UPA domain. Residues Thr788–Leu873 enclose the Death domain. The segment at Ile884–Ala910 is disordered.

In terms of assembly, forms a complex named the PIDDosome with CASP2 and CRADD. Forms a complex with IKBKG and RIPK1. Interacts with FADD and MADD. Post-translationally, undergoes autoproteolytic processing whose extent either directs cells towards survival or apoptotic pathways. Autoproteolytically cleaved into two main fragments PIDD-N and PIDD-C. PIDD-C can be further processed into PIDD-CC, a processing which is enhanced by DNA damage. The cleavage producing PIDD-C is required for translocation of PIDD1 to the nucleus upon DNA damage and activation of NF-kappa-B. PIDD-CC mediates the interaction with CRADD and the cleavage producing PIDD-CC is required for the activation of CASP2. PIDD-N remains associated with PIDD-C and PIDD-CC after cleavage. As to expression, ubiquitous.

The protein localises to the cytoplasm. It localises to the nucleus. In terms of biological role, component of the DNA damage/stress response pathway that functions downstream of p53/TP53 and can either promote cell survival or apoptosis. Associated with CRADD and the CASP2 caspase, it forms the PIDDosome a complex that activates CASP2 and triggers apoptosis. Associated with IKBKG and RIPK1, it enhances sumoylation and ubiquitination of IKBKG which is important for activation of the transcription factor NF-kappa-B. The chain is p53-induced death domain-containing protein 1 from Homo sapiens (Human).